We begin with the raw amino-acid sequence, 260 residues long: HTH-type transcriptional repressor NanR (260 aa).

The segment at 1–21 (MSAFDHSSDDTQETIGNSLRR) is disordered. The 69-residue stretch at 27–95 (KKLSEMVEEE…NGERARVSRP (69 aa)) folds into the HTH gntR-type domain. The H-T-H motif DNA-binding region spans 55 to 74 (ERELMAFFNVGRPSVREALA).

It belongs to the NanR family.

Transcriptional repressor that controls expression of the genes required for the catabolism of sialic acids. The sequence is that of HTH-type transcriptional repressor NanR from Klebsiella aerogenes (strain ATCC 13048 / DSM 30053 / CCUG 1429 / JCM 1235 / KCTC 2190 / NBRC 13534 / NCIMB 10102 / NCTC 10006 / CDC 819-56) (Enterobacter aerogenes).